The following is a 330-amino-acid chain: ADP-L-glycero-D-manno-heptose-6-epimerase (330 aa).

NADP(+) contacts are provided by residues 11–12 (FI), 32–33 (DD), Gln-39, Gln-54, 75–79 (QGACA), and Asn-92. Tyr-139 functions as the Proton acceptor in the catalytic mechanism. Lys-143 is a binding site for NADP(+). Asn-168 provides a ligand contact to substrate. NADP(+) contacts are provided by Val-169 and Lys-177. The active-site Proton acceptor is the Lys-177. Residues Arg-179, His-186, 200–203 (FGEH), Arg-213, and Tyr-292 each bind substrate.

It belongs to the NAD(P)-dependent epimerase/dehydratase family. HldD subfamily. Homopentamer. NADP(+) is required as a cofactor.

It carries out the reaction ADP-D-glycero-beta-D-manno-heptose = ADP-L-glycero-beta-D-manno-heptose. It functions in the pathway nucleotide-sugar biosynthesis; ADP-L-glycero-beta-D-manno-heptose biosynthesis; ADP-L-glycero-beta-D-manno-heptose from D-glycero-beta-D-manno-heptose 7-phosphate: step 4/4. Its pathway is bacterial outer membrane biogenesis; LPS core biosynthesis. Its function is as follows. Catalyzes the interconversion between ADP-D-glycero-beta-D-manno-heptose and ADP-L-glycero-beta-D-manno-heptose via an epimerization at carbon 6 of the heptose. This is ADP-L-glycero-D-manno-heptose-6-epimerase from Pseudomonas aeruginosa (strain ATCC 15692 / DSM 22644 / CIP 104116 / JCM 14847 / LMG 12228 / 1C / PRS 101 / PAO1).